The primary structure comprises 527 residues: MAPERLRSRTVSAFKLRGLLLRSEATKYLTEALQSVTELELEENLGKIIDAVEKQPLSSNMIERSVVEAAVQECSQSMDETIEHVFNIIGAFDIPRFIYNSERKKFLPLSMTNHAAPTLFGTARDKAELYLERYTILHQRTHRHELFTPPVIGSHLEESGSKFQLKTIETLLGSTSKVGDVIVLGMITQLKEGKFFLEDPTGTVQLDLSKAQFHSGLYTEACFVLAEGWFEDQVFHANAFGFPPTEPSSTTRAYYGNINFFGGPSNASVKTYTKLRQLEDENKDAMFVIVSDVWLDQVQVLEKFHVMFSGYSPAPPTCFILCGNFSSAPYGKNQVQALKDSLKSLADIICEYPSIHQSSRFVFVPGPEDPGFGSILPRPPLAESITQEFRQRVPFSVFTTNPCRIQYCTQEIIIFREDLVNKMCRNCVRFPSSSLDIPTHFVKTILSQGHLAPLPLYVCPVHWAYDYTLRVYPVPDLLVIADKYDPFTVTNTDCLCINPGSFPRSGFAFKVFYPSSKTVEDSKLQGF.

The protein belongs to the DNA polymerase epsilon subunit B family. As to quaternary structure, component of the DNA polymerase epsilon complex consisting of four subunits: the catalytic subunit POLE and the accessory subunits POLE2, POLE3 and POLE4.

Its subcellular location is the nucleus. In terms of biological role, accessory component of the DNA polymerase epsilon complex. Participates in DNA repair and in chromosomal DNA replication. This Mus musculus (Mouse) protein is DNA polymerase epsilon subunit 2 (Pole2).